Consider the following 21-residue polypeptide: Chlorophyllase type 2 (21 aa).

Belongs to the AB hydrolase superfamily. Lipase family.

It carries out the reaction a chlorophyll + H2O = a chlorophyllide + phytol + H(+). The protein operates within porphyrin-containing compound metabolism; chlorophyll degradation. Its function is as follows. Catalyzes the hydrolysis of ester bond in chlorophyll to yield chlorophyllide and phytol. This chain is Chlorophyllase type 2, found in Chenopodium album (Fat hen).